The primary structure comprises 506 residues: ATP synthase subunit alpha (506 aa).

ATP is bound at residue 171 to 178 (GDRQTGKT).

The protein belongs to the ATPase alpha/beta chains family. F-type ATPases have 2 components, CF(1) - the catalytic core - and CF(0) - the membrane proton channel. CF(1) has five subunits: alpha(3), beta(3), gamma(1), delta(1), epsilon(1). CF(0) has four main subunits: a(1), b(1), b'(1) and c(9-12).

The protein localises to the cellular thylakoid membrane. The catalysed reaction is ATP + H2O + 4 H(+)(in) = ADP + phosphate + 5 H(+)(out). Produces ATP from ADP in the presence of a proton gradient across the membrane. The alpha chain is a regulatory subunit. The chain is ATP synthase subunit alpha from Nostoc sp. (strain PCC 7120 / SAG 25.82 / UTEX 2576).